The primary structure comprises 232 residues: 2,3,4,5-tetrahydropyridine-2,6-dicarboxylate N-acetyltransferase (232 aa).

It belongs to the transferase hexapeptide repeat family. DapH subfamily.

It catalyses the reaction (S)-2,3,4,5-tetrahydrodipicolinate + acetyl-CoA + H2O = L-2-acetamido-6-oxoheptanedioate + CoA. It functions in the pathway amino-acid biosynthesis; L-lysine biosynthesis via DAP pathway; LL-2,6-diaminopimelate from (S)-tetrahydrodipicolinate (acetylase route): step 1/3. Catalyzes the transfer of an acetyl group from acetyl-CoA to tetrahydrodipicolinate. This Streptococcus pneumoniae serotype 2 (strain D39 / NCTC 7466) protein is 2,3,4,5-tetrahydropyridine-2,6-dicarboxylate N-acetyltransferase.